Here is a 355-residue protein sequence, read N- to C-terminus: MEEGERSPLLSQETAGQKPLSVHRPPTSGCLGPVPREDQAEAWGCSCCPPETKHQALSGTPKKGPAPSLSPGSSCVKYLIFLSNFPFSLLGLLALAIGLWGLAVKGSLGSDLGGPLPTDPMLGLALGGLVVSAASLAGCLGALCENTCLLRGFSGGILAFLVLEAVAGALVVALWGPLQDSLEHTLRVAIAHYQDDPDLRFLLDQVQLGLRCCGAASYQDWQQNLYFNCSSPGVQACSLPASCCIDPREDGASVNDQCGFGVLRLDADAAQRVVYLEGCGPPLRRWLRANLAASGGYAIAVVLLQGAELLLAARLLGALAARSGAAYGPGAHGEDRAGPQSPSPGAPPAAKPARG.

The interval 1–33 is disordered; it reads MEEGERSPLLSQETAGQKPLSVHRPPTSGCLGP. The Cytoplasmic segment spans residues 1–78; the sequence is MEEGERSPLL…LSPGSSCVKY (78 aa). The helical transmembrane segment at 79–99 threads the bilayer; the sequence is LIFLSNFPFSLLGLLALAIGL. At 100 to 120 the chain is on the extracellular side; it reads WGLAVKGSLGSDLGGPLPTDP. A helical transmembrane segment spans residues 121 to 141; it reads MLGLALGGLVVSAASLAGCLG. Residues 142-154 are Cytoplasmic-facing; sequence ALCENTCLLRGFS. A helical transmembrane segment spans residues 155–175; that stretch reads GGILAFLVLEAVAGALVVALW. Topologically, residues 176–355 are extracellular; sequence GPLQDSLEHT…APPAAKPARG (180 aa). 4 disulfides stabilise this stretch: C212/C279, C213/C243, C229/C237, and C244/C258. N-linked (GlcNAc...) asparagine glycosylation occurs at N228. A disordered region spans residues 327-355; it reads YGPGAHGEDRAGPQSPSPGAPPAAKPARG. Pro residues predominate over residues 341 to 355; the sequence is SPSPGAPPAAKPARG.

The protein belongs to the tetraspanin (TM4SF) family. As to quaternary structure, interacts with ADAM10. As to expression, expressed in the eye, including iris, ciliary body, retinal pigment epithelium, but not lens (protein level).

It localises to the cell membrane. Part of TspanC8 subgroup, composed of 6 members that interact with the transmembrane metalloprotease ADAM10. This interaction is required for ADAM10 exit from the endoplasmic reticulum and for enzymatic maturation and trafficking to the cell surface as well as substrate specificity. Different TspanC8/ADAM10 complexes have distinct substrates. In Homo sapiens (Human), this protein is Tetraspanin-10.